The chain runs to 452 residues: Probable ECA polymerase (452 aa).

Helical transmembrane passes span 6-26 (FSGL…LTWF), 37-57 (VFFS…TSVL), 63-83 (VGVA…CFYG), 118-138 (VILM…NGFL), 155-175 (GVAL…VYFL), 181-201 (AWLF…MIVG), 207-227 (IIIA…ISLW), 228-248 (MLAA…LKRY), 341-361 (LVVM…GLII), 378-398 (YKAA…IVLA), and 410-430 (VFFL…FWLF).

It belongs to the WzyE family. Probably part of a complex composed of WzxE, WzyE and WzzE.

Its subcellular location is the cell inner membrane. It functions in the pathway bacterial outer membrane biogenesis; enterobacterial common antigen biosynthesis. Probably involved in the polymerization of enterobacterial common antigen (ECA) trisaccharide repeat units. The chain is Probable ECA polymerase from Salmonella typhi.